A 388-amino-acid polypeptide reads, in one-letter code: Gastricsin (388 aa).

A signal peptide spans 1 to 16; that stretch reads MKWMVVVLVCLQLLEA. Residues 17 to 59 constitute a propeptide, activation peptide; the sequence is AVVKVPLKKFKSIRETMKEKGLLGEFLRTHKYDPAWKYRFGDL. One can recognise a Peptidase A1 domain in the interval 73 to 385; it reads YFGEISIGTP…DLGNNRVGFA (313 aa). Asp91 is a catalytic residue. Cystine bridges form between Cys104–Cys109 and Cys267–Cys271. Residue Asp276 is part of the active site. Cys310 and Cys343 are joined by a disulfide.

Belongs to the peptidase A1 family.

It localises to the secreted. The enzyme catalyses More restricted specificity than pepsin A, but shows preferential cleavage at Tyr-|-Xaa bonds. High activity on hemoglobin.. Hydrolyzes a variety of proteins. The protein is Gastricsin (PGC) of Homo sapiens (Human).